A 651-amino-acid polypeptide reads, in one-letter code: Probable ATP-dependent helicase MJ0942 (651 aa).

The Helicase ATP-binding domain maps to 6-255; sequence YIKEKFPYPK…EIIEKYLTSR (250 aa). 41 to 48 contributes to the ATP binding site; the sequence is APTGVGKT. Cysteine 102, cysteine 149, and cysteine 154 together coordinate [4Fe-4S] cluster. The DEAH box motif lies at 195–198; the sequence is DEAH. Positions 449–638 constitute a Helicase C-terminal domain; the sequence is NLLKILEAIN…NYEVMSLDMA (190 aa).

It belongs to the helicase family. DinG subfamily. The cofactor is [4Fe-4S] cluster.

It catalyses the reaction Couples ATP hydrolysis with the unwinding of duplex DNA at the replication fork by translocating in the 5'-3' direction. This creates two antiparallel DNA single strands (ssDNA). The leading ssDNA polymer is the template for DNA polymerase III holoenzyme which synthesizes a continuous strand.. The enzyme catalyses ATP + H2O = ADP + phosphate + H(+). In terms of biological role, might be a 5'-3' DNA helicase. The sequence is that of Probable ATP-dependent helicase MJ0942 from Methanocaldococcus jannaschii (strain ATCC 43067 / DSM 2661 / JAL-1 / JCM 10045 / NBRC 100440) (Methanococcus jannaschii).